Here is a 273-residue protein sequence, read N- to C-terminus: Translation initiation factor 2 subunit alpha (273 aa).

Residues 12–83 (GEFVVATVKN…EKGHIDLSLK (72 aa)) enclose the S1 motif domain.

This sequence belongs to the eIF-2-alpha family. In terms of assembly, heterotrimer composed of an alpha, a beta and a gamma chain.

EIF-2 functions in the early steps of protein synthesis by forming a ternary complex with GTP and initiator tRNA. In Thermococcus gammatolerans (strain DSM 15229 / JCM 11827 / EJ3), this protein is Translation initiation factor 2 subunit alpha.